We begin with the raw amino-acid sequence, 927 residues long: Nuclear factor of activated T-cells, cytoplasmic 2 (927 aa).

A disordered region spans residues 1 to 29 (MDVPEPQPDPDGGDGPGHEPGGSPQDELD). S23, S53, S54, S56, S99, S107, and S110 each carry phosphoserine. Residues 111 to 116 (PRIEIT) are calcineurin-binding. Residues 119–201 (HELMQAGGAL…CVSPNNAGPD (83 aa)) form a transactivation domain A (TAD-A) region. A phosphoserine mark is found at S136, S150, S170, S173, S174, S176, S177, S179, and S182. Residues 163 to 177 (YREPLCLSPASSGSS) are required for cytoplasmic retention of the phosphorylated form. 2 consecutive repeat copies span residues 186-202 (SPYT…GPDD) and 215-231 (SPRT…LAED). Residues 186 to 292 (SPYTSPCVSP…PHVALQDDSI (107 aa)) are 3 X approximate SP repeats. Disordered regions lie at residues 203–299 (LCPQ…YPPT) and 322–341 (SKIW…PSKA). 5 positions are modified to phosphoserine: S215, S219, S223, S238, and S245. Over residues 216–226 (PRTSPIMSPRT) the composition is skewed to polar residues. The short motif at 253 to 255 (KRR) is the Nuclear localization signal element. Residues S257, S270, S276, S278, S282, S328, and S365 each carry the phosphoserine modification. Over residues 267 to 277 (PAASPQRSRSP) the composition is skewed to low complexity. The 3; approximate repeat unit spans residues 274 to 290 (SRSPSPQPSPHVALQDD). The RHD domain occupies 394 to 576 (ASLPPLEWPL…NPIECSQRSA (183 aa)). Residues 423–430 (RAHYETEG) mediate DNA binding. Phosphoserine occurs at positions 757, 759, and 761. Disordered stretches follow at residues 790–812 (AGSQ…QQAS) and 841–903 (FGPS…QNLD). Over residues 798–812 (GSTLPHTSSASQQAS) the composition is skewed to polar residues. S860 is subject to Phosphoserine.

Member of the multicomponent NFATC transcription complex that consists of at least two components, a pre-existing cytoplasmic component NFATC2 and an inducible nuclear component NFATC1. Other members such as NFATC4, NFATC3 or members of the activating protein-1 family, MAF, GATA4 and Cbp/p300 can also bind the complex. The phosphorylated form specifically interacts with XPO1; which mediates nuclear export. NFATC proteins bind to DNA as monomers. Interacts with NFATC2IP. Interacts with FOXP3. Interacts with TBX21 ('Thr-302' phosphorylated form). Interacts with KAT2A. Interacts with HOMER2 and HOMER3; this interaction competes with calcineurin/PPP3CA-binding and hence prevents NFATC2 dephosphorylation and activation. Interacts with protein phosphatase PPP3CA/calcineurin A. Interacts with AKAP5 (via leucine zipper domain); this is required for NFATC2/NFAT1 recruitment to CRAC channels. In terms of processing, in resting cells, phosphorylated by NFATC-kinase on at least 18 sites in the 99-365 region. Upon cell stimulation, all these sites except Ser-245 are dephosphorylated by calcineurin. Dephosphorylation induces a conformational change that simultaneously exposes an NLS and masks an NES, which results in nuclear localization. Simultaneously, one site among Ser-53; Ser-54 and Ser-56 is phosphorylated; which is required for full transcriptional activity. Ubiquitinated in endothelial cells by RNF213 downstream of the non-canonical Wnt signaling pathway, leading to its degradation by the proteasome. As to expression, expressed in spleen, heart, testis, brain, placenta, muscle and pancreas. Expressed in the thymus. Expressed in the lung. Expressed in cartilage.

It is found in the cytoplasm. The protein resides in the nucleus. Plays a role in the inducible expression of cytokine genes in T cells, especially in the induction of the IL-2, IL-3, IL-4, TNF-alpha or GM-CSF. Promotes invasive migration through the activation of GPC6 expression and WNT5A signaling pathway. Is involved in the negative regulation of chondrogenesis. Recruited by AKAP5 to ORAI1 pore-forming subunit of CRAC channels in Ca(2+) signaling microdomains where store-operated Ca(2+) influx is coupled to calmodulin and calcineurin signaling and activation of NFAT-dependent transcriptional responses. In Mus musculus (Mouse), this protein is Nuclear factor of activated T-cells, cytoplasmic 2 (Nfatc2).